The chain runs to 1496 residues: DENN domain-containing protein 4B (1496 aa).

Residues Ala-44–Leu-203 form the MABP domain. The 175-residue stretch at Val-195–Pro-369 folds into the uDENN domain. Positions Pro-390–Thr-526 constitute a cDENN domain. A dDENN domain is found at Leu-528–Ala-644. Positions Gln-720–Gln-744 are disordered. Residues Pro-729 to Pro-739 are compositionally biased toward low complexity. PPR repeat units follow at residues Trp-775–Pro-811 and Asp-812–Pro-846. Disordered stretches follow at residues Leu-891–Ala-970, Val-995–Arg-1055, Pro-1067–Trp-1119, and Ser-1205–Gly-1227. Low complexity predominate over residues Gln-896 to Gln-912. 2 stretches are compositionally biased toward polar residues: residues Val-913–Ala-924 and Arg-935–Ala-944. Ser-953 carries the phosphoserine modification. The span at Arg-1075–Arg-1090 shows a compositional bias: pro residues. At Ser-1092 the chain carries Phosphoserine. Low complexity predominate over residues Gly-1105–Trp-1119.

The protein localises to the golgi apparatus. Its function is as follows. Guanine nucleotide exchange factor (GEF) which may activate RAB10. Promotes the exchange of GDP to GTP, converting inactive GDP-bound Rab proteins into their active GTP-bound form. This is DENN domain-containing protein 4B (DENND4B) from Homo sapiens (Human).